A 376-amino-acid polypeptide reads, in one-letter code: D-alanine--D-alanine ligase (376 aa).

Residues 155–361 form the ATP-grasp domain; the sequence is KIIFEKAGIP…YPELIEKLID (207 aa). 188 to 243 contributes to the ATP binding site; it reads EEKFSYPVFVKPSNAGSSVGVSKAHDKNELKEALIYAARYDRKVLIEEFINGREVE. Residues Asp314, Glu328, and Asn330 each contribute to the Mg(2+) site.

The protein belongs to the D-alanine--D-alanine ligase family. It depends on Mg(2+) as a cofactor. Requires Mn(2+) as cofactor.

The protein resides in the cytoplasm. The enzyme catalyses 2 D-alanine + ATP = D-alanyl-D-alanine + ADP + phosphate + H(+). Its pathway is cell wall biogenesis; peptidoglycan biosynthesis. In terms of biological role, cell wall formation. This Acetivibrio thermocellus (strain ATCC 27405 / DSM 1237 / JCM 9322 / NBRC 103400 / NCIMB 10682 / NRRL B-4536 / VPI 7372) (Clostridium thermocellum) protein is D-alanine--D-alanine ligase.